The primary structure comprises 129 residues: Protein Turandot A1/2 (129 aa).

An N-terminal signal peptide occupies residues 1–21 (MNSSTALMCFALLLISPLCLG). Residue N49 is glycosylated (N-linked (GlcNAc...) asparagine).

It belongs to the Turandot family.

It localises to the secreted. Its function is as follows. A humoral factor that plays a role in stress tolerance; gives increased resistance to the lethal effects of bacterial challenge and stress. Regulated by the JAK/STAT pathway and NF-KB-like Relish pathway in the fat body, upd3 in the hemocytes and Mekk1 in response to septic injury and consequent immune response. In Drosophila sechellia (Fruit fly), this protein is Protein Turandot A1/2 (TotA1).